The sequence spans 85 residues: Progonadoliberin-2 (85 aa).

The first 23 residues, 1–23, serve as a signal peptide directing secretion; it reads MCVSRLVLLFGLLLCVGAQLSNA. Glutamine 24 bears the Pyrrolidone carboxylic acid mark. Glycine 33 is modified (glycine amide).

It belongs to the GnRH family.

It is found in the secreted. Its function is as follows. Stimulates the secretion of gonadotropins. The chain is Progonadoliberin-2 (gnrh2) from Morone saxatilis (Striped bass).